Here is an 84-residue protein sequence, read N- to C-terminus: Cytochrome b559 subunit alpha (84 aa).

A helical membrane pass occupies residues 22–36 (IIHSITIPALFVAGW). Residue histidine 24 coordinates heme.

Belongs to the PsbE/PsbF family. As to quaternary structure, heterodimer of an alpha subunit and a beta subunit. PSII is composed of 1 copy each of membrane proteins PsbA, PsbB, PsbC, PsbD, PsbE, PsbF, PsbH, PsbI, PsbJ, PsbK, PsbL, PsbM, PsbT, PsbX, PsbY, PsbZ, Psb30/Ycf12, at least 3 peripheral proteins of the oxygen-evolving complex and a large number of cofactors. It forms dimeric complexes. Requires heme b as cofactor.

Its subcellular location is the plastid. It localises to the chloroplast thylakoid membrane. In terms of biological role, this b-type cytochrome is tightly associated with the reaction center of photosystem II (PSII). PSII is a light-driven water:plastoquinone oxidoreductase that uses light energy to abstract electrons from H(2)O, generating O(2) and a proton gradient subsequently used for ATP formation. It consists of a core antenna complex that captures photons, and an electron transfer chain that converts photonic excitation into a charge separation. This chain is Cytochrome b559 subunit alpha, found in Guillardia theta (Cryptophyte).